The primary structure comprises 105 residues: MARLLLRRGFFSSHIRMSSDQLGELGTGAGKGGGGGGSVRAAGGSFGRREAAEEERYFRQKEREQLAALKNHHEEEIDHHKKEIERLQREIDRHKGKIRKLKHDD.

A disordered region spans residues 17 to 52 (MSSDQLGELGTGAGKGGGGGGSVRAAGGSFGRREAA). The segment at 22-51 (LGELGTGAGKGGGGGGSVRAAGGSFGRREA) is N-terminal inhibitory region. The span at 25–38 (LGTGAGKGGGGGGS) shows a compositional bias: gly residues. Residues 58–105 (FRQKEREQLAALKNHHEEEIDHHKKEIERLQREIDRHKGKIRKLKHDD) adopt a coiled-coil conformation. Residues 73-105 (HEEEIDHHKKEIERLQREIDRHKGKIRKLKHDD) are antiparallel alpha-helical coiled coil region.

The protein belongs to the ATPase inhibitor family. Homodimer; represents the active form and is present at a pH value below 6.5. Homotetramer; represents the inactive form and is present at a pH value above 7.0.

It localises to the mitochondrion. In terms of biological role, endogenous F(1)F(o)-ATPase inhibitor limiting ATP depletion when the mitochondrial membrane potential falls below a threshold and the F(1)F(o)-ATP synthase starts hydrolyzing ATP to pump protons out of the mitochondrial matrix. Required to avoid the consumption of cellular ATP when the F(1)F(o)-ATP synthase enzyme acts as an ATP hydrolase. Indirectly acts as a regulator of heme synthesis in erythroid tissues: regulates heme synthesis by modulating the mitochondrial pH and redox potential, allowing fech to efficiently catalyze the incorporation of iron into protoporphyrin IX to produce heme. The chain is ATPase inhibitor A, mitochondrial from Danio rerio (Zebrafish).